A 147-amino-acid chain; its full sequence is uncharacterized protein (147 aa).

Residues 63 to 79 (LFIVACSAVFATIAYIN) traverse the membrane as a helical segment.

It belongs to the FUN14 family.

The protein resides in the membrane. This is an uncharacterized protein from Schizosaccharomyces pombe (strain 972 / ATCC 24843) (Fission yeast).